We begin with the raw amino-acid sequence, 1067 residues long: Isoleucine--tRNA ligase (1067 aa).

The 'HIGH' region signature appears at 49–59 (PYVSGAIHLGT). Residues 625–629 (KMSKS) carry the 'KMSKS' region motif. An ATP-binding site is contributed by K628.

Belongs to the class-I aminoacyl-tRNA synthetase family. IleS type 2 subfamily. Monomer. Requires Zn(2+) as cofactor.

The protein resides in the cytoplasm. It catalyses the reaction tRNA(Ile) + L-isoleucine + ATP = L-isoleucyl-tRNA(Ile) + AMP + diphosphate. Catalyzes the attachment of isoleucine to tRNA(Ile). As IleRS can inadvertently accommodate and process structurally similar amino acids such as valine, to avoid such errors it has two additional distinct tRNA(Ile)-dependent editing activities. One activity is designated as 'pretransfer' editing and involves the hydrolysis of activated Val-AMP. The other activity is designated 'posttransfer' editing and involves deacylation of mischarged Val-tRNA(Ile). The protein is Isoleucine--tRNA ligase of Pyrococcus abyssi (strain GE5 / Orsay).